The chain runs to 33 residues: Cytochrome b6-f complex subunit 8 (33 aa).

The helical transmembrane segment at Leu-2 to Val-22 threads the bilayer.

This sequence belongs to the PetN family. As to quaternary structure, the 4 large subunits of the cytochrome b6-f complex are cytochrome b6, subunit IV (17 kDa polypeptide, PetD), cytochrome f and the Rieske protein, while the 4 small subunits are PetG, PetL, PetM and PetN. The complex functions as a dimer.

It localises to the cellular thylakoid membrane. Component of the cytochrome b6-f complex, which mediates electron transfer between photosystem II (PSII) and photosystem I (PSI), cyclic electron flow around PSI, and state transitions. This is Cytochrome b6-f complex subunit 8 from Parasynechococcus marenigrum (strain WH8102).